Reading from the N-terminus, the 300-residue chain is Ribonuclease HIII (300 aa).

Residues 86-300 (RPRLGVDESG…FYEICDSTDI (215 aa)) form the RNase H type-2 domain. 3 residues coordinate a divalent metal cation: Asp-92, Glu-93, and Asp-196.

The protein belongs to the RNase HII family. RnhC subfamily. Mn(2+) serves as cofactor. The cofactor is Mg(2+).

It localises to the cytoplasm. The catalysed reaction is Endonucleolytic cleavage to 5'-phosphomonoester.. Functionally, endonuclease that specifically degrades the RNA of RNA-DNA hybrids. The polypeptide is Ribonuclease HIII (Chlamydia abortus (strain DSM 27085 / S26/3) (Chlamydophila abortus)).